A 57-amino-acid chain; its full sequence is Protein translocase subunit SecE (57 aa).

The chain crosses the membrane as a helical span at residues 33-53; sequence GAGIFLVGLLGFIIFAVMSFL.

Belongs to the SecE/SEC61-gamma family. In terms of assembly, component of the Sec protein translocase complex. Heterotrimer consisting of SecY (alpha), SecG (beta) and SecE (gamma) subunits. The heterotrimers can form oligomers, although 1 heterotrimer is thought to be able to translocate proteins. Interacts with the ribosome. May interact with SecDF, and other proteins may be involved.

The protein localises to the cell membrane. Functionally, essential subunit of the Sec protein translocation channel SecYEG. Clamps together the 2 halves of SecY. May contact the channel plug during translocation. In Haloferax mediterranei (strain ATCC 33500 / DSM 1411 / JCM 8866 / NBRC 14739 / NCIMB 2177 / R-4) (Halobacterium mediterranei), this protein is Protein translocase subunit SecE.